Here is a 701-residue protein sequence, read N- to C-terminus: Glycine--tRNA ligase beta subunit (701 aa).

This sequence belongs to the class-II aminoacyl-tRNA synthetase family. In terms of assembly, tetramer of two alpha and two beta subunits.

Its subcellular location is the cytoplasm. It carries out the reaction tRNA(Gly) + glycine + ATP = glycyl-tRNA(Gly) + AMP + diphosphate. In Bradyrhizobium sp. (strain BTAi1 / ATCC BAA-1182), this protein is Glycine--tRNA ligase beta subunit.